A 212-amino-acid chain; its full sequence is Lipid A acyltransferase PagP (212 aa).

An N-terminal signal peptide occupies residues 1–26 (MSSTYFHSSLLAATLFSVTLTAPAFA). A compositionally biased stretch (low complexity) spans 29-44 (NTQNTPQTITTKKPQP). A disordered region spans residues 29-50 (NTQNTPQTITTKKPQPAENTFS). Residues H84, D127, and S128 contribute to the active site.

It belongs to the lipid A palmitoyltransferase family. Homodimer.

It is found in the cell outer membrane. The enzyme catalyses a lipid A + a 1,2-diacyl-sn-glycero-3-phosphocholine = a hepta-acyl lipid A + a 2-acyl-sn-glycero-3-phosphocholine. It carries out the reaction a lipid IVA + a 1,2-diacyl-sn-glycero-3-phosphocholine = a lipid IVB + a 2-acyl-sn-glycero-3-phosphocholine. The catalysed reaction is a lipid IIA + a 1,2-diacyl-sn-glycero-3-phosphocholine = a lipid IIB + a 2-acyl-sn-glycero-3-phosphocholine. Transfers a fatty acid residue from the sn-1 position of a phospholipid to the N-linked hydroxyfatty acid chain on the proximal unit of lipid A or its precursors. The protein is Lipid A acyltransferase PagP of Proteus mirabilis (strain HI4320).